The sequence spans 881 residues: Probable inorganic carbon transporter subunit DabA (881 aa).

Zn(2+)-binding residues include cysteine 399, aspartate 401, histidine 585, and cysteine 600.

Belongs to the inorganic carbon transporter (TC 9.A.2) DabA family. In terms of assembly, forms a complex with DabB. Requires Zn(2+) as cofactor.

The protein resides in the cell membrane. In terms of biological role, part of an energy-coupled inorganic carbon pump. This is Probable inorganic carbon transporter subunit DabA from Geobacillus sp. (strain WCH70).